We begin with the raw amino-acid sequence, 212 residues long: MAIVSKGILGKKVGMTQVFTEEGHLIPVTVVEAGPCYVIQKKTKATDGYNAIQVGFGALRERLANKPQKGHVAKASVKPMRYIREFRVDDVEAYEIGQVITAELFAAGDAVDVVGISKGKGFAGMIKRHGASRGPMKHGSKYHRRTGSLGAKGPARVFKGRNLPGRMGGERVTVQNLKVVRVDADKNMILVKGAVPGAKKSLLILKPSVKAK.

Residues Arg-128 to Thr-146 show a composition bias toward basic residues. Residues Arg-128–Pro-164 form a disordered region.

The protein belongs to the universal ribosomal protein uL3 family. As to quaternary structure, part of the 50S ribosomal subunit. Forms a cluster with proteins L14 and L19.

One of the primary rRNA binding proteins, it binds directly near the 3'-end of the 23S rRNA, where it nucleates assembly of the 50S subunit. The sequence is that of Large ribosomal subunit protein uL3 from Desulfitobacterium hafniense (strain Y51).